The sequence spans 285 residues: Nucleotide-binding protein Geob_2284 (285 aa).

8-15 (GLSGSGKS) is an ATP binding site. 59–62 (DIRG) contributes to the GTP binding site.

It belongs to the RapZ-like family.

Functionally, displays ATPase and GTPase activities. The protein is Nucleotide-binding protein Geob_2284 of Geotalea daltonii (strain DSM 22248 / JCM 15807 / FRC-32) (Geobacter daltonii).